We begin with the raw amino-acid sequence, 227 residues long: Pro-thyrotropin-releasing hormone-A (227 aa).

The signal sequence occupies residues 1 to 15; it reads MVSVWWLLLLGTTVS. Q75 is subject to Pyrrolidone carboxylic acid. The residue at position 77 (P77) is a Proline amide. Q89 is subject to Pyrrolidone carboxylic acid. P91 is subject to Proline amide. Q107 carries the pyrrolidone carboxylic acid modification. 2 disordered regions span residues 107 to 128 and 151 to 204; these read QHPGRRFVDDVEKRQHPGKREE and RRQH…PCEG. P109 is modified (proline amide). Positions 112–128 are enriched in basic and acidic residues; that stretch reads RFVDDVEKRQHPGKREE. The residue at position 121 (Q121) is a Pyrrolidone carboxylic acid. At P123 the chain carries Proline amide. At Q153 the chain carries Pyrrolidone carboxylic acid. P155 bears the Proline amide mark. Residue Q168 is modified to Pyrrolidone carboxylic acid. P170 carries the proline amide modification. The segment covering 184-201 has biased composition (basic and acidic residues); that stretch reads ENSKEVGKRQHPGKRYDP. Q193 is modified (pyrrolidone carboxylic acid). P195 carries the proline amide modification.

Belongs to the TRH family.

The protein resides in the secreted. This chain is Pro-thyrotropin-releasing hormone-A (trh-a), found in Xenopus laevis (African clawed frog).